The following is a 79-amino-acid chain: MDDIETRVRKLVAARFGVEECDIRLDSDFRNDFGAESLEVVELVMALEAEFGVEIADDDAERIETVRQAIDYLEEAVPT.

Residues 2-77 (DDIETRVRKL…QAIDYLEEAV (76 aa)) form the Carrier domain. Serine 37 bears the O-(pantetheine 4'-phosphoryl)serine mark.

It belongs to the acyl carrier protein (ACP) family. In terms of processing, 4'-phosphopantetheine is transferred from CoA to a specific serine of apo-ACP by AcpS. This modification is essential for activity because fatty acids are bound in thioester linkage to the sulfhydryl of the prosthetic group.

It is found in the cytoplasm. The protein operates within lipid metabolism; fatty acid biosynthesis. In terms of biological role, carrier of the growing fatty acid chain in fatty acid biosynthesis. This chain is Acyl carrier protein 2, found in Pseudomonas aeruginosa (strain ATCC 15692 / DSM 22644 / CIP 104116 / JCM 14847 / LMG 12228 / 1C / PRS 101 / PAO1).